The primary structure comprises 247 residues: Adenosylcobinamide-GDP ribazoletransferase (247 aa).

6 helical membrane passes run 34–54 (IVMF…IFIL), 59–79 (CGIP…TGGF), 113–133 (GGLA…ELAL), 138–158 (MLAA…LLMY), 171–191 (VFIG…AVIV), and 194–214 (VLLP…AIFI).

The protein belongs to the CobS family. The cofactor is Mg(2+).

The protein localises to the cell inner membrane. The catalysed reaction is alpha-ribazole + adenosylcob(III)inamide-GDP = adenosylcob(III)alamin + GMP + H(+). It catalyses the reaction alpha-ribazole 5'-phosphate + adenosylcob(III)inamide-GDP = adenosylcob(III)alamin 5'-phosphate + GMP + H(+). It functions in the pathway cofactor biosynthesis; adenosylcobalamin biosynthesis; adenosylcobalamin from cob(II)yrinate a,c-diamide: step 7/7. In terms of biological role, joins adenosylcobinamide-GDP and alpha-ribazole to generate adenosylcobalamin (Ado-cobalamin). Also synthesizes adenosylcobalamin 5'-phosphate from adenosylcobinamide-GDP and alpha-ribazole 5'-phosphate. The polypeptide is Adenosylcobinamide-GDP ribazoletransferase (Salmonella schwarzengrund (strain CVM19633)).